A 347-amino-acid chain; its full sequence is NADH-ubiquinone oxidoreductase chain 2 (347 aa).

10 helical membrane-spanning segments follow: residues 3 to 23, 25 to 45, 59 to 79, 93 to 115, 149 to 169, 178 to 198, 200 to 220, 242 to 262, 274 to 294, and 323 to 343; these read PPIL…VLTS, HWLL…PILM, YFLT…INLL, MAST…HFWV, INTN…GWGG, ILAY…TYNP, VMIL…MLFI, SFIL…GFIP, EMII…YFYM, and MALL…TPMM.

It belongs to the complex I subunit 2 family. In terms of assembly, core subunit of respiratory chain NADH dehydrogenase (Complex I) which is composed of 45 different subunits. Interacts with TMEM242.

The protein resides in the mitochondrion inner membrane. It carries out the reaction a ubiquinone + NADH + 5 H(+)(in) = a ubiquinol + NAD(+) + 4 H(+)(out). Its function is as follows. Core subunit of the mitochondrial membrane respiratory chain NADH dehydrogenase (Complex I) which catalyzes electron transfer from NADH through the respiratory chain, using ubiquinone as an electron acceptor. Essential for the catalytic activity and assembly of complex I. The polypeptide is NADH-ubiquinone oxidoreductase chain 2 (Nandinia binotata (African palm civet)).